The following is a 500-amino-acid chain: MGLLSGDTLGPLAVALLIFLLLLDLMHRRSRWAPRYPPGPTPLPVLGNLLQVDFEDPRPSFNQLRRRFGNVFSLQQVWTPVVVLNGLAAVREALVYRSQDTADRPPPAVYEHLGYGPRAEGVILARYGDAWREQRRFSLTTLRNFGLGKKSLEQWVTEEASCLCAAFADQAGRPFSPMDLLNKAVSNVIASLTFGCRFEYNDPRIIKLLDLTEDGLKEEFNLVRKVVEAVPVLLSIPGLAARVFPAQKAFMALIDELIAEQKMTRDPTQPPRHLTDAFLDEVKEAKGNPESSFNDENLRLVVADLFSAGMVTTSTTLAWALLLMILHPDVQRRVQQEIDEVIGQVRRPEMGDQALMPFTVAVVHEVQRFADIVPLGLPHMTSRDIEVQGFHIPKGTTLITNLSSVLKDETVWEKPFRFHPEHFLDAQGRFVKQEAFIPFSAGRRACLGEPLARMELFLFFTSLLQHFSFSVPAGQPRPSEHGVFAFLVTPAPYQLCAVPR.

Residue cysteine 446 participates in heme binding.

This sequence belongs to the cytochrome P450 family. It depends on heme as a cofactor.

It is found in the endoplasmic reticulum membrane. Its subcellular location is the microsome membrane. It carries out the reaction an organic molecule + reduced [NADPH--hemoprotein reductase] + O2 = an alcohol + oxidized [NADPH--hemoprotein reductase] + H2O + H(+). Functionally, cytochromes P450 are a group of heme-thiolate monooxygenases. In liver microsomes, this enzyme is involved in an NADPH-dependent electron transport pathway. It oxidizes a variety of structurally unrelated compounds, including steroids, fatty acids, and xenobiotics. This is Cytochrome P450 2D14 (CYP2D14) from Bos taurus (Bovine).